A 658-amino-acid polypeptide reads, in one-letter code: Interferon-induced GTP-binding protein Mx1 (658 aa).

At methionine 1 the chain carries N-acetylmethionine. The tract at residues 1–20 is disordered; sequence MVNSKGKITDSDPGSSHLLL. In terms of domain architecture, Dynamin-type G spans 65–338; sequence DLALPAIAVI…LITHICKTLP (274 aa). The tract at residues 75–82 is G1 motif; it reads GDQSSGKS. 75 to 82 contributes to the GTP binding site; it reads GDQSSGKS. Positions 100–102 are G2 motif; that stretch reads VTR. The tract at residues 176–179 is G3 motif; it reads DLPG. Residues 176–180 and 245–248 contribute to the GTP site; these read DLPGI and TKPD. Positions 245 to 248 are G4 motif; it reads TKPD. Residues 277–280 are G5 motif; it reads KCRG. A bundle signaling element (BSE) region spans residues 339 to 364; sequence LLEKQIKENYEKITEELQKYGSDVPE. The interval 364-531 is middle domain; sequence EEEHEKMFFL…HFQMEQIVYC (168 aa). Residues 365-628 are stalk; it reads EEHEKMFFLI…KDTHNWLLKE (264 aa). The critical for lipid-binding stretch occupies residues 551–554; the sequence is KDKK. Residues 570-658 form the GED domain; sequence LSDIFEHLLA…ARRRLAKFPG (89 aa).

Belongs to the TRAFAC class dynamin-like GTPase superfamily. Dynamin/Fzo/YdjA family. Homooligomer. Oligomerizes into multimeric filamentous or ring-like structures by virtue of its stalk domain. Oligomerization is critical for GTPase activity, protein stability, and recognition of viral target structures. Interacts with TRPC1, TRPC3, TRPC4, TRPC5, TRPC6 and TRPC7. Interacts with HSPA5. Interacts with TUBB/TUBB5. Interacts with DDX39A and DDX39B. In terms of processing, ISGylated.

It localises to the cytoplasm. The protein resides in the endoplasmic reticulum membrane. It is found in the perinuclear region. Interferon-induced dynamin-like GTPase with antiviral activity. The protein is Interferon-induced GTP-binding protein Mx1 (MX1) of Otaria byronia (South American sea lion).